The sequence spans 484 residues: Trigger factor (484 aa).

Residues 162–243 (GDFISIDLSA…VKSVKERELP (82 aa)) enclose the PPIase FKBP-type domain. The interval 427–484 (DGNTIDTSEFFGKPPENDVTDLLDDDADGDAGVDADGDTENSAEPADADSADAAQGAG) is disordered. The span at 444-476 (DVTDLLDDDADGDAGVDADGDTENSAEPADADS) shows a compositional bias: acidic residues.

It belongs to the FKBP-type PPIase family. Tig subfamily.

The protein resides in the cytoplasm. It catalyses the reaction [protein]-peptidylproline (omega=180) = [protein]-peptidylproline (omega=0). Functionally, involved in protein export. Acts as a chaperone by maintaining the newly synthesized protein in an open conformation. Functions as a peptidyl-prolyl cis-trans isomerase. This is Trigger factor from Mycobacterium marinum (strain ATCC BAA-535 / M).